Here is an 81-residue protein sequence, read N- to C-terminus: Large ribosomal subunit protein bL31B (81 aa).

Belongs to the bacterial ribosomal protein bL31 family. Type B subfamily. In terms of assembly, part of the 50S ribosomal subunit.

The polypeptide is Large ribosomal subunit protein bL31B (Listeria innocua serovar 6a (strain ATCC BAA-680 / CLIP 11262)).